Here is a 182-residue protein sequence, read N- to C-terminus: dTTP/UTP pyrophosphatase (182 aa).

Asp-64 functions as the Proton acceptor in the catalytic mechanism.

It belongs to the Maf family. YhdE subfamily. A divalent metal cation is required as a cofactor.

The protein resides in the cytoplasm. It carries out the reaction dTTP + H2O = dTMP + diphosphate + H(+). It catalyses the reaction UTP + H2O = UMP + diphosphate + H(+). Its function is as follows. Nucleoside triphosphate pyrophosphatase that hydrolyzes dTTP and UTP. May have a dual role in cell division arrest and in preventing the incorporation of modified nucleotides into cellular nucleic acids. This Thermosipho melanesiensis (strain DSM 12029 / CIP 104789 / BI429) protein is dTTP/UTP pyrophosphatase.